Here is a 418-residue protein sequence, read N- to C-terminus: UDP-N-acetylglucosamine 1-carboxyvinyltransferase (418 aa).

23–24 serves as a coordination point for phosphoenolpyruvate; the sequence is KN. Arginine 93 serves as a coordination point for UDP-N-acetyl-alpha-D-glucosamine. Aspartate 117 acts as the Proton donor in catalysis. Aspartate 305 and valine 327 together coordinate UDP-N-acetyl-alpha-D-glucosamine.

This sequence belongs to the EPSP synthase family. MurA subfamily.

Its subcellular location is the cytoplasm. It carries out the reaction phosphoenolpyruvate + UDP-N-acetyl-alpha-D-glucosamine = UDP-N-acetyl-3-O-(1-carboxyvinyl)-alpha-D-glucosamine + phosphate. Its pathway is cell wall biogenesis; peptidoglycan biosynthesis. Functionally, cell wall formation. Adds enolpyruvyl to UDP-N-acetylglucosamine. This chain is UDP-N-acetylglucosamine 1-carboxyvinyltransferase, found in Mycobacterium leprae (strain TN).